We begin with the raw amino-acid sequence, 607 residues long: COMPASS component cclA (607 aa).

Over residues methionine 1 to proline 19 the composition is skewed to low complexity. Disordered regions lie at residues methionine 1–histidine 22 and glycine 34–alanine 86. Residues serine 57–glutamate 69 are compositionally biased toward basic residues. Positions isoleucine 157–alanine 376 constitute a B30.2/SPRY domain. A disordered region spans residues asparagine 587 to glycine 607.

This sequence belongs to the cclA family. As to quaternary structure, component of the COMPASS complex.

The protein localises to the nucleus. It is found in the chromosome. The protein resides in the telomere. Component of the COMPASS (Set1C) complex that specifically mono-, di- and trimethylates histone H3 to form H3K4me1/2/3, which subsequently plays a role in telomere length maintenance and transcription elongation regulation. Controls the production of several secondary metabolites, including monodictyphenone, emodin and emodin derivatives, as well as two anti-osteoporosis polyketides, F9775A and F9775B. This Emericella nidulans (strain FGSC A4 / ATCC 38163 / CBS 112.46 / NRRL 194 / M139) (Aspergillus nidulans) protein is COMPASS component cclA.